We begin with the raw amino-acid sequence, 451 residues long: tRNA modification GTPase MnmE (451 aa).

The (6S)-5-formyl-5,6,7,8-tetrahydrofolate site is built by R23, E80, and K119. One can recognise a TrmE-type G domain in the interval 215 to 372; the sequence is GIKVVLTGQP…LRTVLLKTVG (158 aa). N225 contributes to the K(+) binding site. GTP is bound by residues 225-230, 244-250, and 269-272; these read NVGKSS, TEIPGTT, and DTAG. S229 is a binding site for Mg(2+). Residues T244, I246, and T249 each contribute to the K(+) site. T250 serves as a coordination point for Mg(2+). K451 is a binding site for (6S)-5-formyl-5,6,7,8-tetrahydrofolate.

The protein belongs to the TRAFAC class TrmE-Era-EngA-EngB-Septin-like GTPase superfamily. TrmE GTPase family. In terms of assembly, homodimer. Heterotetramer of two MnmE and two MnmG subunits. The cofactor is K(+).

It is found in the cytoplasm. In terms of biological role, exhibits a very high intrinsic GTPase hydrolysis rate. Involved in the addition of a carboxymethylaminomethyl (cmnm) group at the wobble position (U34) of certain tRNAs, forming tRNA-cmnm(5)s(2)U34. This chain is tRNA modification GTPase MnmE, found in Nitrosomonas eutropha (strain DSM 101675 / C91 / Nm57).